We begin with the raw amino-acid sequence, 154 residues long: 6,7-dimethyl-8-ribityllumazine synthase (154 aa).

Residues F26, 60-62, and 84-86 each bind 5-amino-6-(D-ribitylamino)uracil; these read ALE and CII. A (2S)-2-hydroxy-3-oxobutyl phosphate-binding site is contributed by 89–90; the sequence is QT. The active-site Proton donor is the H92. Position 117 (N117) interacts with 5-amino-6-(D-ribitylamino)uracil. R131 is a binding site for (2S)-2-hydroxy-3-oxobutyl phosphate.

This sequence belongs to the DMRL synthase family.

It catalyses the reaction (2S)-2-hydroxy-3-oxobutyl phosphate + 5-amino-6-(D-ribitylamino)uracil = 6,7-dimethyl-8-(1-D-ribityl)lumazine + phosphate + 2 H2O + H(+). The protein operates within cofactor biosynthesis; riboflavin biosynthesis; riboflavin from 2-hydroxy-3-oxobutyl phosphate and 5-amino-6-(D-ribitylamino)uracil: step 1/2. Functionally, catalyzes the formation of 6,7-dimethyl-8-ribityllumazine by condensation of 5-amino-6-(D-ribitylamino)uracil with 3,4-dihydroxy-2-butanone 4-phosphate. This is the penultimate step in the biosynthesis of riboflavin. This is 6,7-dimethyl-8-ribityllumazine synthase from Verminephrobacter eiseniae (strain EF01-2).